A 107-amino-acid chain; its full sequence is U1-lycotoxin-Ls1b (107 aa).

The first 20 residues, 1-20 (MMKVLVVVALLVTLISYSSS), serve as a signal peptide directing secretion. The propeptide occupies 21-41 (EGIDDLEADELLSLMANEQTR). 4 disulfide bridges follow: C44–C59, C51–C68, C58–C86, and C70–C84.

The protein belongs to the neurotoxin 19 (CSTX) family. 04 (U1-Lctx) subfamily. In terms of tissue distribution, expressed by the venom gland.

Its subcellular location is the secreted. This Lycosa singoriensis (Wolf spider) protein is U1-lycotoxin-Ls1b.